The primary structure comprises 108 residues: DNA-directed RNA polymerase subunit omega (108 aa).

Residues 1–32 are disordered; sequence MTNSQSDAALAAVPDRFDPSAGGPGAYDTPLG.

Belongs to the RNA polymerase subunit omega family. The RNAP catalytic core consists of 2 alpha, 1 beta, 1 beta' and 1 omega subunit. When a sigma factor is associated with the core the holoenzyme is formed, which can initiate transcription.

It carries out the reaction RNA(n) + a ribonucleoside 5'-triphosphate = RNA(n+1) + diphosphate. Promotes RNA polymerase assembly. Latches the N- and C-terminal regions of the beta' subunit thereby facilitating its interaction with the beta and alpha subunits. This chain is DNA-directed RNA polymerase subunit omega, found in Mycobacterium avium (strain 104).